The sequence spans 122 residues: Large ribosomal subunit protein uL14 (122 aa).

This sequence belongs to the universal ribosomal protein uL14 family. As to quaternary structure, part of the 50S ribosomal subunit. Forms a cluster with proteins L3 and L19. In the 70S ribosome, L14 and L19 interact and together make contacts with the 16S rRNA in bridges B5 and B8.

Functionally, binds to 23S rRNA. Forms part of two intersubunit bridges in the 70S ribosome. The polypeptide is Large ribosomal subunit protein uL14 (Thermosipho africanus (strain TCF52B)).